The sequence spans 423 residues: ER-bound oxygenase mpaB' (423 aa).

Over 1 to 22 the chain is Lumenal; sequence MSLSLPPALSELARALPYSRTQ. Residues 23-41 form a helical membrane-spanning segment; it reads WLPILVGFLIGYPLLIKAL. The Cytoplasmic segment spans residues 42 to 423; sequence RYKRLGEMKK…ISRTGKCPFH (382 aa).

It belongs to the mpaB oxygenase family.

The protein resides in the endoplasmic reticulum membrane. The enzyme catalyses 4-farnesyl-3,5-dihydroxy-6-methylphthalide + AH2 + 2 O2 = (4E,8E)-10-(4,6-dihydroxy-7-methyl-3-oxo-1,3-dihydro-2-benzofuran-5-yl)-4,8-dimethyldeca-4,8-dienoate + acetone + A + H2O + H(+). Its pathway is secondary metabolite biosynthesis; terpenoid biosynthesis. Functionally, ER-bound oxygenase; part of the gene cluster that mediates the biosynthesis of mycophenolic acid (MPA), the first isolated antibiotic natural product in the world obtained from a culture of Penicillium brevicompactum in 1893. MpaB' catalyzes the oxidative cleavage the C19-C20 double bond in farnesyl-DHMP (FDHMP) to yield FDHMP-3C via a mycophenolic aldehyde intermediate. The first step of the pathway is the synthesis of 5-methylorsellinic acid (5MOA) by the cytosolic polyketide synthase mpaC. 5MOA is then converted to the phthalide compound 5,7-dihydroxy-4,6-dimethylphthalide (DHMP) by the endoplasmic reticulum-bound cytochrome P450 monooxygenase mpaDE. MpaDE first catalyzes hydroxylation of 5-MOA to 4,6-dihydroxy-2-(hydroxymethyl)-3-methylbenzoic acid (DHMB). MpaDE then acts as a lactone synthase that catalyzes the ring closure to convert DHMB into DHMP. The next step is the prenylation of DHMP by the Golgi apparatus-associated prenyltransferase mpaA to yield farnesyl-DHMP (FDHMP). The ER-bound oxygenase mpaB then mediates the oxidative cleavage the C19-C20 double bond in FDHMP to yield FDHMP-3C via a mycophenolic aldehyde intermediate. The O-methyltransferase mpaG catalyzes the methylation of FDHMP-3C to yield MFDHMP-3C. After the cytosolic methylation of FDHMP-3C, MFDHMP-3C enters into peroxisomes probably via free diffusion due to its low molecular weight. Upon a peroxisomal CoA ligation reaction, catalyzed by a beta-oxidation component enzyme acyl-CoA ligase ACL891, MFDHMP-3C-CoA would then be restricted to peroxisomes for the following beta-oxidation pathway steps. The peroxisomal beta-oxidation machinery than converts MFDHMP-3C-CoA into MPA_CoA, via a beta-oxidation chain-shortening process. Finally mpaH acts as a peroxisomal acyl-CoA hydrolase with high substrate specificity toward MPA-CoA to release the final product MPA. The polypeptide is ER-bound oxygenase mpaB' (Penicillium brevicompactum).